A 233-amino-acid polypeptide reads, in one-letter code: Uracil-DNA glycosylase (233 aa).

The active-site Proton acceptor is the aspartate 70.

The protein belongs to the uracil-DNA glycosylase (UDG) superfamily. UNG family.

The protein localises to the cytoplasm. The catalysed reaction is Hydrolyzes single-stranded DNA or mismatched double-stranded DNA and polynucleotides, releasing free uracil.. Its function is as follows. Excises uracil residues from the DNA which can arise as a result of misincorporation of dUMP residues by DNA polymerase or due to deamination of cytosine. The sequence is that of Uracil-DNA glycosylase from Helicobacter acinonychis (strain Sheeba).